The following is a 268-amino-acid chain: AB hydrolase superfamily protein YisY (268 aa).

Positions 23–254 (PIIFLHGWPL…NSGHGAFYEE (232 aa)) constitute an AB hydrolase-1 domain. Residues serine 96, aspartate 220, and histidine 248 contribute to the active site.

This sequence belongs to the AB hydrolase superfamily.

This Bacillus subtilis (strain 168) protein is AB hydrolase superfamily protein YisY (yisY).